Reading from the N-terminus, the 587-residue chain is Glutamine--tRNA ligase (587 aa).

The 'HIGH' region signature appears at 58–68 (PEPNGYLHIGH). Residues 59-61 (EPN) and 65-71 (HIGHAKS) contribute to the ATP site. 2 residues coordinate L-glutamine: aspartate 91 and tyrosine 240. ATP contacts are provided by residues threonine 259 and 294 to 295 (RL). A 'KMSKS' region motif is present at residues 301–305 (VTSKR).

This sequence belongs to the class-I aminoacyl-tRNA synthetase family. In terms of assembly, monomer.

It is found in the cytoplasm. It carries out the reaction tRNA(Gln) + L-glutamine + ATP = L-glutaminyl-tRNA(Gln) + AMP + diphosphate. The sequence is that of Glutamine--tRNA ligase from Bordetella pertussis (strain Tohama I / ATCC BAA-589 / NCTC 13251).